The primary structure comprises 194 residues: Holliday junction branch migration complex subunit RuvA (194 aa).

The segment at 1–61 is domain I; it reads MIASLSGLLE…EDSVSLYGFA (61 aa). The tract at residues 62-136 is domain II; that stretch reads SVLECTVFEQ…GKLTSVPLEN (75 aa). The segment at 136–140 is flexible linker; sequence NRKQE. A domain III region spans residues 141-194; that stretch reads QAVDRSAEIVQALIGLGWQRQESAAAVESVLEKDQSLTMPEILRNALRYLAKQE.

Belongs to the RuvA family. Homotetramer. Forms an RuvA(8)-RuvB(12)-Holliday junction (HJ) complex. HJ DNA is sandwiched between 2 RuvA tetramers; dsDNA enters through RuvA and exits via RuvB. An RuvB hexamer assembles on each DNA strand where it exits the tetramer. Each RuvB hexamer is contacted by two RuvA subunits (via domain III) on 2 adjacent RuvB subunits; this complex drives branch migration. In the full resolvosome a probable DNA-RuvA(4)-RuvB(12)-RuvC(2) complex forms which resolves the HJ.

Its subcellular location is the cytoplasm. In terms of biological role, the RuvA-RuvB-RuvC complex processes Holliday junction (HJ) DNA during genetic recombination and DNA repair, while the RuvA-RuvB complex plays an important role in the rescue of blocked DNA replication forks via replication fork reversal (RFR). RuvA specifically binds to HJ cruciform DNA, conferring on it an open structure. The RuvB hexamer acts as an ATP-dependent pump, pulling dsDNA into and through the RuvAB complex. HJ branch migration allows RuvC to scan DNA until it finds its consensus sequence, where it cleaves and resolves the cruciform DNA. The polypeptide is Holliday junction branch migration complex subunit RuvA (Tropheryma whipplei (strain Twist) (Whipple's bacillus)).